The chain runs to 440 residues: Suppressor of cytokine signaling 4 (440 aa).

Polar residues predominate over residues 1–11 (MAENSESNSKN). Residues 1–29 (MAENSESNSKNVDVRPKTSRSRSADRKDG) are disordered. A compositionally biased stretch (basic and acidic residues) spans 12–29 (VDVRPKTSRSRSADRKDG). Residues 286-381 (CYWGVMDKYA…FFEPLLSTPL (96 aa)) form the SH2 domain. The region spanning 376–425 (LLSTPLIRTFPFSLQHICRTVICNCTTYDGIDALPIPSSMKLYLKEYHYK) is the SOCS box domain.

The protein operates within protein modification; protein ubiquitination. Functionally, SOCS family proteins form part of a classical negative feedback system that regulates cytokine signal transduction. Substrate-recognition component of a SCF-like ECS (Elongin BC-CUL2/5-SOCS-box protein) E3 ubiquitin-protein ligase complex which mediates the ubiquitination and subsequent proteasomal degradation of target proteins. Inhibits EGF signaling by mediating the degradation of the Tyr-phosphorylated EGF receptor/EGFR. This is Suppressor of cytokine signaling 4 (SOCS4) from Bos taurus (Bovine).